Here is a 562-residue protein sequence, read N- to C-terminus: TBC1 domain family member 24 (562 aa).

A 1,2-diacyl-sn-glycero-3-phospho-(1D-myo-inositol)-binding positions include Lys36, Arg40, Lys238, Arg242, and 293–297 (RLFSR). The Rab-GAP TBC domain occupies 42–259 (GHWAKSHSLR…FFHKVRGGQP (218 aa)). The TLDc domain maps to 337 to 549 (EIVSVKEMRD…ISIIEVWGFK (213 aa)). Residues 451–464 (ASSGDNDANSSQSA) show a composition bias toward low complexity. Residues 451-471 (ASSGDNDANSSQSAKDGIDPS) form a disordered region.

Interacts with ARF6.

It localises to the cell membrane. It is found in the cytoplasm. The protein resides in the cytoplasmic vesicle membrane. The protein localises to the presynapse. Functionally, may act as a GTPase-activating protein for Rab family protein(s). Involved in neuronal projections development, probably through a negative modulation of ARF6 function. Involved in the regulation of synaptic vesicle trafficking. This chain is TBC1 domain family member 24 (tbc1d24), found in Xenopus tropicalis (Western clawed frog).